The following is a 94-amino-acid chain: Pyrimidine/purine nucleoside phosphorylase (94 aa).

It belongs to the nucleoside phosphorylase PpnP family.

The enzyme catalyses a purine D-ribonucleoside + phosphate = a purine nucleobase + alpha-D-ribose 1-phosphate. It catalyses the reaction adenosine + phosphate = alpha-D-ribose 1-phosphate + adenine. It carries out the reaction cytidine + phosphate = cytosine + alpha-D-ribose 1-phosphate. The catalysed reaction is guanosine + phosphate = alpha-D-ribose 1-phosphate + guanine. The enzyme catalyses inosine + phosphate = alpha-D-ribose 1-phosphate + hypoxanthine. It catalyses the reaction thymidine + phosphate = 2-deoxy-alpha-D-ribose 1-phosphate + thymine. It carries out the reaction uridine + phosphate = alpha-D-ribose 1-phosphate + uracil. The catalysed reaction is xanthosine + phosphate = alpha-D-ribose 1-phosphate + xanthine. Catalyzes the phosphorolysis of diverse nucleosides, yielding D-ribose 1-phosphate and the respective free bases. Can use uridine, adenosine, guanosine, cytidine, thymidine, inosine and xanthosine as substrates. Also catalyzes the reverse reactions. The protein is Pyrimidine/purine nucleoside phosphorylase of Citrobacter koseri (strain ATCC BAA-895 / CDC 4225-83 / SGSC4696).